The chain runs to 473 residues: Photosystem II CP43 reaction center protein (473 aa).

Residues 1 to 14 (MKTLYSLRRFYHVE) constitute a propeptide that is removed on maturation. The residue at position 15 (Thr-15) is an N-acetylthreonine. Thr-15 is modified (phosphothreonine). Transmembrane regions (helical) follow at residues 69–93 (LFEVAHFVPEKPMYEQGLILLPHLA), 134–155 (LLGPETLEESFPFFGYVWKDRN), 178–200 (KALYFGGVYDTWAPGGGDVRKIT), 255–275 (KPFAWARRAFVWSGEAYLSYS), and 291–312 (WFNNTAYPSEFYGPTGPEASQA). [CaMn4O5] cluster is bound at residue Glu-367. A helical transmembrane segment spans residues 447 to 471 (RARAAAAGFEKGIDRDFEPVLSMTP).

The protein belongs to the PsbB/PsbC family. PsbC subfamily. In terms of assembly, PSII is composed of 1 copy each of membrane proteins PsbA, PsbB, PsbC, PsbD, PsbE, PsbF, PsbH, PsbI, PsbJ, PsbK, PsbL, PsbM, PsbT, PsbX, PsbY, PsbZ, Psb30/Ycf12, at least 3 peripheral proteins of the oxygen-evolving complex and a large number of cofactors. It forms dimeric complexes. Binds multiple chlorophylls and provides some of the ligands for the Ca-4Mn-5O cluster of the oxygen-evolving complex. It may also provide a ligand for a Cl- that is required for oxygen evolution. PSII binds additional chlorophylls, carotenoids and specific lipids. serves as cofactor.

The protein localises to the plastid. Its subcellular location is the chloroplast thylakoid membrane. Its function is as follows. One of the components of the core complex of photosystem II (PSII). It binds chlorophyll and helps catalyze the primary light-induced photochemical processes of PSII. PSII is a light-driven water:plastoquinone oxidoreductase, using light energy to abstract electrons from H(2)O, generating O(2) and a proton gradient subsequently used for ATP formation. This is Photosystem II CP43 reaction center protein from Ipomoea purpurea (Common morning glory).